A 304-amino-acid chain; its full sequence is Ornithine carbamoyltransferase (304 aa).

Carbamoyl phosphate is bound by residues Ser-47–Thr-50, Arg-98, and His-125–Gln-128. L-ornithine contacts are provided by residues Asn-156, Asp-221, and Ser-225–Met-226. Residues Cys-262–Leu-263 and Arg-290 each bind carbamoyl phosphate.

Belongs to the aspartate/ornithine carbamoyltransferase superfamily. OTCase family.

It is found in the cytoplasm. The catalysed reaction is carbamoyl phosphate + L-ornithine = L-citrulline + phosphate + H(+). The protein operates within amino-acid biosynthesis; L-arginine biosynthesis; L-arginine from L-ornithine and carbamoyl phosphate: step 1/3. Functionally, reversibly catalyzes the transfer of the carbamoyl group from carbamoyl phosphate (CP) to the N(epsilon) atom of ornithine (ORN) to produce L-citrulline. This is Ornithine carbamoyltransferase from Methanococcus aeolicus (strain ATCC BAA-1280 / DSM 17508 / OCM 812 / Nankai-3).